The primary structure comprises 74 residues: Cytochrome b559 subunit alpha (74 aa).

The chain crosses the membrane as a helical span at residues 22–36; sequence VIHTVTIPSLFVAGW. Histidine 24 lines the heme pocket.

The protein belongs to the PsbE/PsbF family. In terms of assembly, heterodimer of an alpha subunit and a beta subunit. PSII is composed of 1 copy each of membrane proteins PsbA, PsbB, PsbC, PsbD, PsbE, PsbF, PsbH, PsbI, PsbJ, PsbK, PsbL, PsbM, PsbT, PsbX, PsbY, PsbZ, Psb30/Ycf12, at least 3 peripheral proteins of the oxygen-evolving complex and a large number of cofactors. It forms dimeric complexes. Heme b is required as a cofactor.

The protein resides in the plastid. Its subcellular location is the cyanelle thylakoid membrane. Its function is as follows. This b-type cytochrome is tightly associated with the reaction center of photosystem II (PSII). PSII is a light-driven water:plastoquinone oxidoreductase that uses light energy to abstract electrons from H(2)O, generating O(2) and a proton gradient subsequently used for ATP formation. It consists of a core antenna complex that captures photons, and an electron transfer chain that converts photonic excitation into a charge separation. The chain is Cytochrome b559 subunit alpha from Cyanophora paradoxa.